Here is a 438-residue protein sequence, read N- to C-terminus: 3-phosphoshikimate 1-carboxyvinyltransferase (438 aa).

Residues K23, S24, and R28 each contribute to the 3-phosphoshikimate site. K23 is a phosphoenolpyruvate binding site. Positions 94 and 122 each coordinate phosphoenolpyruvate. Positions 167, 169, 321, and 348 each coordinate 3-phosphoshikimate. Residue Q169 coordinates phosphoenolpyruvate. The active-site Proton acceptor is D321. Phosphoenolpyruvate-binding residues include R352 and R393.

This sequence belongs to the EPSP synthase family. As to quaternary structure, monomer.

It is found in the cytoplasm. It catalyses the reaction 3-phosphoshikimate + phosphoenolpyruvate = 5-O-(1-carboxyvinyl)-3-phosphoshikimate + phosphate. It functions in the pathway metabolic intermediate biosynthesis; chorismate biosynthesis; chorismate from D-erythrose 4-phosphate and phosphoenolpyruvate: step 6/7. Functionally, catalyzes the transfer of the enolpyruvyl moiety of phosphoenolpyruvate (PEP) to the 5-hydroxyl of shikimate-3-phosphate (S3P) to produce enolpyruvyl shikimate-3-phosphate and inorganic phosphate. The chain is 3-phosphoshikimate 1-carboxyvinyltransferase from Helicobacter hepaticus (strain ATCC 51449 / 3B1).